Reading from the N-terminus, the 396-residue chain is Obg-like ATPase 1 (396 aa).

Residues 23-283 enclose the OBG-type G domain; that stretch reads LKIGIVGLPN…LSAEERQKYL (261 aa). 32–37 contacts ATP; sequence NVGKST. Mg(2+) is bound by residues serine 36 and threonine 56. Leucine 231 is an ATP binding site. A Nuclear export signal motif is present at residues 267-274; the sequence is LELKLQEL. At lysine 294 the chain carries N6-acetyllysine. A TGS domain is found at 304 to 387; that stretch reads QLEYFFTAGP…EDGDIIFFKF (84 aa).

It belongs to the TRAFAC class OBG-HflX-like GTPase superfamily. OBG GTPase family. YchF/OLA1 subfamily. In terms of assembly, monomer. Mg(2+) is required as a cofactor.

It is found in the cytoplasm. Its subcellular location is the nucleus. The protein localises to the nucleolus. Hydrolyzes ATP, and can also hydrolyze GTP with lower efficiency. Has lower affinity for GTP. The sequence is that of Obg-like ATPase 1 from Pongo abelii (Sumatran orangutan).